Consider the following 205-residue polypeptide: Phosphoenolpyruvate guanylyltransferase (205 aa).

Phosphoenolpyruvate is bound by residues T138, G154, and S157.

Belongs to the CofC family.

It catalyses the reaction phosphoenolpyruvate + GTP + H(+) = enolpyruvoyl-2-diphospho-5'-guanosine + diphosphate. It participates in cofactor biosynthesis; coenzyme F420 biosynthesis. Its function is as follows. Guanylyltransferase that catalyzes the activation of phosphoenolpyruvate (PEP) as enolpyruvoyl-2-diphospho-5'-guanosine, via the condensation of PEP with GTP. It is involved in the biosynthesis of coenzyme F420, a hydride carrier cofactor. The sequence is that of Phosphoenolpyruvate guanylyltransferase from Chloroflexus aurantiacus (strain ATCC 29364 / DSM 637 / Y-400-fl).